We begin with the raw amino-acid sequence, 353 residues long: Protein MGF 360-13L (353 aa).

This sequence belongs to the asfivirus MGF 360 family.

Its function is as follows. Plays a role in virus cell tropism, and may be required for efficient virus replication in macrophages. In African swine fever virus (isolate Warthog/Namibia/Wart80/1980) (ASFV), this protein is Protein MGF 360-13L.